The sequence spans 256 residues: MLTLIPLPAFEDNYIWVWHDAKYAVAVDPGDPAVLSTYLDSRGLALAAVLVTHHHRDHTGGNTWLRQRYNCAIYAPDNPRIPAVSHVVRGGDSVAVPELGLALAVLATPGHTLDHVSYVGNGHLFCGDTLFGCGCGKLFEGDAAMMSASLDALAALPPTTRVCCAHEYTLSNIDFAKTIDGANPALLERERIDRAARAQNRPTLPSTLALERTTNPFLRFHDADMRAFAVGELGSPDPGPATVFGAIRAAKDRWDG.

Zn(2+) is bound by residues histidine 53, histidine 55, aspartate 57, histidine 58, histidine 111, aspartate 128, and histidine 166.

This sequence belongs to the metallo-beta-lactamase superfamily. Glyoxalase II family. Monomer. Requires Zn(2+) as cofactor.

The enzyme catalyses an S-(2-hydroxyacyl)glutathione + H2O = a 2-hydroxy carboxylate + glutathione + H(+). It participates in secondary metabolite metabolism; methylglyoxal degradation; (R)-lactate from methylglyoxal: step 2/2. In terms of biological role, thiolesterase that catalyzes the hydrolysis of S-D-lactoyl-glutathione to form glutathione and D-lactic acid. This chain is Hydroxyacylglutathione hydrolase, found in Thiobacillus denitrificans (strain ATCC 25259 / T1).